We begin with the raw amino-acid sequence, 176 residues long: Xanthine-guanine phosphoribosyltransferase (176 aa).

Residues 51 to 52, Arg-88, and 111 to 119 each bind 5-phospho-alpha-D-ribose 1-diphosphate; these read RG and DDLVDSGKT. Arg-88 provides a ligand contact to GMP. A Mg(2+)-binding site is contributed by Asp-112. Positions 115 and 158 each coordinate guanine. The xanthine site is built by Asp-115 and Ile-158. GMP-binding positions include 115 to 119 and 157 to 158; these read DSGKT and WI.

Belongs to the purine/pyrimidine phosphoribosyltransferase family. XGPT subfamily. As to quaternary structure, homotetramer. Mg(2+) is required as a cofactor.

The protein resides in the cell inner membrane. It carries out the reaction GMP + diphosphate = guanine + 5-phospho-alpha-D-ribose 1-diphosphate. It catalyses the reaction XMP + diphosphate = xanthine + 5-phospho-alpha-D-ribose 1-diphosphate. The catalysed reaction is IMP + diphosphate = hypoxanthine + 5-phospho-alpha-D-ribose 1-diphosphate. It functions in the pathway purine metabolism; GMP biosynthesis via salvage pathway; GMP from guanine: step 1/1. The protein operates within purine metabolism; XMP biosynthesis via salvage pathway; XMP from xanthine: step 1/1. Functionally, purine salvage pathway enzyme that catalyzes the transfer of the ribosyl-5-phosphate group from 5-phospho-alpha-D-ribose 1-diphosphate (PRPP) to the N9 position of the 6-oxopurines guanine and xanthine to form the corresponding ribonucleotides GMP (guanosine 5'-monophosphate) and XMP (xanthosine 5'-monophosphate), with the release of PPi. To a lesser extent, also acts on hypoxanthine. This is Xanthine-guanine phosphoribosyltransferase from Roseobacter denitrificans (strain ATCC 33942 / OCh 114) (Erythrobacter sp. (strain OCh 114)).